A 1031-amino-acid chain; its full sequence is Caprin-2 (1031 aa).

5 disordered regions span residues 1-27, 364-458, 500-520, 605-658, and 830-876; these read MKSA…QSTL, LQEE…SWEN, PKDV…LPKD, DQAS…SSEA, and RSGT…SMTP. 2 stretches are compositionally biased toward polar residues: residues 425 to 439 and 446 to 458; these read VSVQ…SWTT and ASVQ…SWEN. The span at 608–646 shows a compositional bias: low complexity; the sequence is SSGSETEFTTSETPEMVVSPCKPKPASALASPNPPLSKS. Over residues 830 to 853 the composition is skewed to polar residues; sequence RSGTSSGLQANSRAGWSDSSQVSS. S852 and S853 each carry phosphoserine. In terms of domain architecture, C1q spans 897–1031; it reads PQQMRVAFSA…TFSGYLLYQD (135 aa). Positions 982 and 988 each coordinate Ca(2+).

It belongs to the caprin family. In terms of assembly, homotrimer; via C1q domain. Found in a complex with LRP6, CCNY and CDK14 during G2/M stage; CAPRIN2 functions as a scaffold for the complex by binding to CCNY via its N terminus and to CDK14 via its C terminus. Interacts with LRP5. Interacts with LRP6. As to expression, specifically expressed in brain (at protein level).

It is found in the cytoplasm. Its subcellular location is the cell membrane. Its function is as follows. Promotes phosphorylation of the Wnt coreceptor LRP6, leading to increased activity of the canonical Wnt signaling pathway. Facilitates constitutive LRP6 phosphorylation by CDK14/CCNY during G2/M stage of the cell cycle, which may potentiate cells for Wnt signaling. May regulate the transport and translation of mRNAs, modulating for instance the expression of proteins involved in synaptic plasticity in neurons. Involved in regulation of growth as erythroblasts shift from a highly proliferative state towards their terminal phase of differentiation. May be involved in apoptosis. The chain is Caprin-2 from Mus musculus (Mouse).